The sequence spans 218 residues: Large ribosomal subunit protein uL3 (218 aa).

This sequence belongs to the universal ribosomal protein uL3 family. As to quaternary structure, part of the 50S ribosomal subunit. Forms a cluster with proteins L14 and L19.

Functionally, one of the primary rRNA binding proteins, it binds directly near the 3'-end of the 23S rRNA, where it nucleates assembly of the 50S subunit. The chain is Large ribosomal subunit protein uL3 from Mycolicibacterium gilvum (strain PYR-GCK) (Mycobacterium gilvum (strain PYR-GCK)).